The following is a 143-amino-acid chain: Large ribosomal subunit protein uL16c (143 aa).

This sequence belongs to the universal ribosomal protein uL16 family. In terms of assembly, part of the 50S ribosomal subunit.

Its subcellular location is the plastid. The protein localises to the chloroplast. The protein is Large ribosomal subunit protein uL16c of Marchantia polymorpha (Common liverwort).